A 118-amino-acid polypeptide reads, in one-letter code: Neutral phospholipase A2 homolog taipoxin beta chain 2 (118 aa).

7 disulfides stabilise this stretch: cysteine 11/cysteine 71, cysteine 27/cysteine 117, cysteine 29/cysteine 45, cysteine 44/cysteine 98, cysteine 51/cysteine 91, cysteine 60/cysteine 84, and cysteine 78/cysteine 89.

Belongs to the phospholipase A2 family. Group I subfamily. D49 sub-subfamily. As to quaternary structure, heterotrimer of alpha, beta, and gamma chains; non-covalently linked. As to expression, expressed by the venom gland.

The protein localises to the secreted. Heterotrimer: Snake venom phospholipase A2 (PLA2) heterotrimer that acts as a potent presynaptic neurotoxin by blocking synaptic transmission and synaptic vesicle recycling. May act by binding in a calcium-dependent fashion to neurotonal pentraxin-1 (NPTX1) and neurotonal pentraxin-2 (NPTX2), but not to neuronal pentraxin receptor (NPTXR). Also binds to taipoxin-associated calcium binding protein 49 (RCN2), a protein localized in the lumen of endoplasmic reticulum. Functionally, monomer (beta chain): Snake venom phospholipase A2 homolog that is neither toxic nor enzymatically active. Does not bind calcium. In Oxyuranus scutellatus scutellatus (Australian taipan), this protein is Neutral phospholipase A2 homolog taipoxin beta chain 2.